The primary structure comprises 65 residues: Conopeptide Vt3.2 (65 aa).

The N-terminal stretch at 1-12 is a signal peptide; that stretch reads LLFPLATLQLNA. The propeptide occupies 13–48; sequence DQPVERNAENIQDLNPDKRFIFMPVPRRRGPYGSVH. The residue at position 64 (S64) is a Serine amide.

The protein belongs to the conotoxin M superfamily. Homodimer; disulfide-linked. Expressed by the venom duct.

It is found in the secreted. This is Conopeptide Vt3.2 from Conus planorbis (Planorbis cone).